Consider the following 198-residue polypeptide: dITP/XTP pyrophosphatase (198 aa).

Substrate is bound at residue 7–12; that stretch reads TRNAGK. The Mg(2+) site is built by Glu-40 and Asp-69. Catalysis depends on Asp-69, which acts as the Proton acceptor. Substrate contacts are provided by residues Ser-70, 152–155, Lys-175, and 180–181; these read FGYD and HR.

Belongs to the HAM1 NTPase family. Homodimer. It depends on Mg(2+) as a cofactor.

It carries out the reaction XTP + H2O = XMP + diphosphate + H(+). It catalyses the reaction dITP + H2O = dIMP + diphosphate + H(+). The catalysed reaction is ITP + H2O = IMP + diphosphate + H(+). Its function is as follows. Pyrophosphatase that catalyzes the hydrolysis of nucleoside triphosphates to their monophosphate derivatives, with a high preference for the non-canonical purine nucleotides XTP (xanthosine triphosphate), dITP (deoxyinosine triphosphate) and ITP. Seems to function as a house-cleaning enzyme that removes non-canonical purine nucleotides from the nucleotide pool, thus preventing their incorporation into DNA/RNA and avoiding chromosomal lesions. This is dITP/XTP pyrophosphatase from Exiguobacterium sibiricum (strain DSM 17290 / CCUG 55495 / CIP 109462 / JCM 13490 / 255-15).